The chain runs to 139 residues: Hydrogenase maturation factor HypA (139 aa).

H2 contributes to the Ni(2+) binding site. The Zn(2+) site is built by C73, C76, C110, and C113.

The protein belongs to the HypA/HybF family.

Its function is as follows. Involved in the maturation of [NiFe] hydrogenases. Required for nickel insertion into the metal center of the hydrogenase. The protein is Hydrogenase maturation factor HypA of Thermococcus gammatolerans (strain DSM 15229 / JCM 11827 / EJ3).